Reading from the N-terminus, the 74-residue chain is Large ribosomal subunit protein bL31 (74 aa).

Belongs to the bacterial ribosomal protein bL31 family. Type A subfamily. Part of the 50S ribosomal subunit.

Binds the 23S rRNA. The chain is Large ribosomal subunit protein bL31 from Chlorobaculum parvum (strain DSM 263 / NCIMB 8327) (Chlorobium vibrioforme subsp. thiosulfatophilum).